The following is a 264-amino-acid chain: Phosphonoacetaldehyde hydrolase (264 aa).

Catalysis depends on Asp9, which acts as the Nucleophile. Residues Asp9 and Ala11 each contribute to the Mg(2+) site. The active-site Schiff-base intermediate with substrate is the Lys50. Asp183 provides a ligand contact to Mg(2+).

This sequence belongs to the HAD-like hydrolase superfamily. PhnX family. As to quaternary structure, homodimer. The cofactor is Mg(2+).

It carries out the reaction phosphonoacetaldehyde + H2O = acetaldehyde + phosphate + H(+). In terms of biological role, involved in phosphonate degradation. This is Phosphonoacetaldehyde hydrolase from Bacillus thuringiensis (strain Al Hakam).